We begin with the raw amino-acid sequence, 178 residues long: Thioredoxin F1, chloroplastic (178 aa).

The segment at 1–22 (MPLSLRLSPSPTALSPTTGGFG) is disordered. The N-terminal 57 residues, 1–57 (MPLSLRLSPSPTALSPTTGGFGPSRKQCRIPYSGVPTTKIGFCSLDSRKRGDSSVVR), are a transit peptide targeting the chloroplast. Residues 7-18 (LSPSPTALSPTT) are compositionally biased toward polar residues. Residues 58-174 (CSLETVNVSV…LVAAIETARS (117 aa)) enclose the Thioredoxin domain. Catalysis depends on nucleophile residues C99 and C102. Residues C99 and C102 are joined by a disulfide bond. An S-glutathionyl cysteine; transient modification is found at C126.

This sequence belongs to the thioredoxin family. Plant F-type subfamily. Glutathionylation at Cys-126 decreases its ability to be reduced by ferredoxin-thioredoxin reductase and reduces its efficiency in activating target chloroplastic enzymes.

It localises to the plastid. It is found in the chloroplast stroma. Thiol-disulfide oxidoreductase involved in the redox regulation of enzymes of both reductive pentose phosphate pathway (Calvin-Benson cycle) and oxidative pentose phosphate pathway. Under light or reducing conditions, activates in chloroplast the glyceraldehyde-3-phosphate dehydrogenase, the phosphoribulokinase and the fructose-1,6-bisphosphate phosphatase, and inhibits the glucose-6-phosphate dehydrogenase. This is Thioredoxin F1, chloroplastic from Arabidopsis thaliana (Mouse-ear cress).